A 1346-amino-acid chain; its full sequence is Adhesion G protein-coupled receptor A3 (1346 aa).

A signal peptide spans M1–A21. Residues S18–T45 form a disordered region. Over G22–P739 the chain is Extracellular. 4 LRR repeats span residues F66–G90, L91–G114, F116–G138, and L139–S162. The LRRCT domain maps to L176–D223. The region spanning P229 to V327 is the Ig-like domain. An intrachain disulfide couples C251 to C311. LRR repeat units lie at residues L503–A529, T574–S600, and V611–S632. The GAIN-B domain occupies P563–G728. The segment at P679–G728 is GPS. An intrachain disulfide couples C698 to C712. A helical transmembrane segment spans residues V740–I760. The Cytoplasmic segment spans residues Y761 to W773. A helical membrane pass occupies residues H774–I794. Over N795–Q804 the chain is Extracellular. Residues A805–A825 traverse the membrane as a helical segment. Residues R826–R854 lie on the Cytoplasmic side of the membrane. The helical transmembrane segment at F855–I875 threads the bilayer. The Extracellular segment spans residues K876–A897. The helical transmembrane segment at F898–I918 threads the bilayer. Over Q919 to L977 the chain is Cytoplasmic. Residues M978 to I998 form a helical membrane-spanning segment. Residues S999–D1005 are Extracellular-facing. The helical transmembrane segment at L1006–H1026 threads the bilayer. The Cytoplasmic segment spans residues H1027–V1346. A compositionally biased stretch (polar residues) spans S1157–I1169. Disordered stretches follow at residues S1157–R1188 and S1202–E1284. Composition is skewed to basic residues over residues P1173–S1187 and N1212–R1226. Low complexity predominate over residues Q1238–S1252. Positions I1266–L1280 are enriched in gly residues. A PDZ-binding motif is present at residues T1344–V1346.

Belongs to the G-protein coupled receptor 2 family. Adhesion G-protein coupled receptor (ADGR) subfamily. As to quaternary structure, interacts (via PDZ-binding motif) with disheveled proteins; leading to the localization of dishevelled proteins to specific membrane subdomains. In terms of tissue distribution, ubiquitously expressed at very low levels.

The protein resides in the cell membrane. Orphan receptor that acts as a critical modulator of planar cell polarity during gastrulation. Controls the localization of dishevelled. The polypeptide is Adhesion G protein-coupled receptor A3 (adgra3) (Danio rerio (Zebrafish)).